A 161-amino-acid polypeptide reads, in one-letter code: S-protein homolog 2 (161 aa).

The N-terminal stretch at 1-24 (MDIPKQYLSLFILIIFITTKLSQA) is a signal peptide. N-linked (GlcNAc...) asparagine glycosylation is found at N75, N106, and N157.

Belongs to the plant self-incompatibility (S1) protein family.

Its subcellular location is the secreted. The protein is S-protein homolog 2 of Arabidopsis thaliana (Mouse-ear cress).